The chain runs to 498 residues: Lysine--tRNA ligase (498 aa).

Mg(2+) is bound by residues E407 and E414.

Belongs to the class-II aminoacyl-tRNA synthetase family. In terms of assembly, homodimer. Mg(2+) serves as cofactor.

The protein resides in the cytoplasm. The catalysed reaction is tRNA(Lys) + L-lysine + ATP = L-lysyl-tRNA(Lys) + AMP + diphosphate. The protein is Lysine--tRNA ligase of Rhizobium etli (strain CIAT 652).